Consider the following 275-residue polypeptide: Calcyphosin (275 aa).

The tract at residues 59–87 (PGTTQLTQGPAGRTLGQTQASCPEPRPSM) is disordered. 4 EF-hand domains span residues 107 to 142 (SGIQ…LGLV), 143 to 178 (LDQA…PMSQ), 179 to 214 (AREA…RAHP), and 222 to 258 (TEDE…VSAS). 14 residues coordinate Ca(2+): D120, D122, S124, S126, E131, D156, N158, S160, T162, E167, D192, S194, D196, and D203. S126 carries the phosphoserine; by PKA modification.

Monomer. Does not form oligomers in the presence of calcium.

Its subcellular location is the cytoplasm. In terms of biological role, calcium-binding protein. May play a role in cellular signaling events (Potential). This is Calcyphosin from Homo sapiens (Human).